We begin with the raw amino-acid sequence, 462 residues long: NAD-capped RNA hydrolase NUDT12 (462 aa).

3 ANK repeats span residues 11 to 40 (EIVTQFHCSAAEGDIAKLTGILSHSPSLLN), 45 to 74 (NGWTALMYAARNGHPEIVQFLLEKGCDRSI), and 78 to 98 (SRQTALDIAVFWGYKHIANLL). Lysine 185 carries the post-translational modification N6-succinyllysine. Positions 284 and 287 each coordinate Zn(2+). Lysine 292 carries the post-translational modification N6-succinyllysine. Zn(2+)-binding residues include cysteine 302 and cysteine 307. Substrate-binding positions include tyrosine 318, 354 to 356 (AGF), glutamate 370, glutamate 374, and glutamate 415. The Nudix hydrolase domain occupies 319–453 (PRVDPVVIMQ…SRAIAHQLIK (135 aa)). Residues alanine 354, glutamate 370, glutamate 374, and glutamate 415 each contribute to the Mg(2+) site. Positions 355–376 (GFIEPGETIEDAVRREVEEESG) match the Nudix box motif. A Microbody targeting signal motif is present at residues 460 to 462 (PNL).

Belongs to the Nudix hydrolase family. NudC subfamily. Homodimer. Homodimerization is essential for its catalytic activity and protein stability. Interacts (via ANK repeats) with BLMH. Requires Mg(2+) as cofactor. The cofactor is Zn(2+).

It localises to the cytoplasm. The protein localises to the peroxisome. Its subcellular location is the cytoplasmic granule. The enzyme catalyses a 5'-end NAD(+)-phospho-ribonucleoside in mRNA + H2O = a 5'-end phospho-adenosine-phospho-ribonucleoside in mRNA + beta-nicotinamide D-ribonucleotide + 2 H(+). It catalyses the reaction NAD(+) + H2O = beta-nicotinamide D-ribonucleotide + AMP + 2 H(+). The catalysed reaction is NADH + H2O = reduced beta-nicotinamide D-ribonucleotide + AMP + 2 H(+). It carries out the reaction NADPH + H2O = reduced beta-nicotinamide D-ribonucleotide + adenosine 2',5'-bisphosphate + 2 H(+). Its function is as follows. mRNA decapping enzyme that specifically removes the nicotinamide adenine dinucleotide (NAD) cap from a subset of mRNAs by hydrolyzing the diphosphate linkage to produce nicotinamide mononucleotide (NMN) and 5' monophosphate mRNA. The NAD-cap is present at the 5'-end of some RNAs; in contrast to the canonical N7 methylguanosine (m7G) cap, the NAD cap promotes mRNA decay. Preferentially acts on NAD-capped transcripts in response to nutrient stress. Also acts on free nicotinamide adenine dinucleotide molecules: hydrolyzes NAD(H) into NMN(H) and AMP, and NADPH into NMNH and 2',5'-ADP. May act to regulate the concentration of peroxisomal nicotinamide nucleotide cofactors required for oxidative metabolism in this organelle. Regulates the levels of circadian clock components PER1, PER2, PER3 and CRY2 in the liver. This Macaca fascicularis (Crab-eating macaque) protein is NAD-capped RNA hydrolase NUDT12.